The chain runs to 74 residues: DNA-directed RNA polymerase subunit omega (74 aa).

The protein belongs to the RNA polymerase subunit omega family. In terms of assembly, the RNAP catalytic core consists of 2 alpha, 1 beta, 1 beta' and 1 omega subunit. When a sigma factor is associated with the core the holoenzyme is formed, which can initiate transcription.

The catalysed reaction is RNA(n) + a ribonucleoside 5'-triphosphate = RNA(n+1) + diphosphate. Promotes RNA polymerase assembly. Latches the N- and C-terminal regions of the beta' subunit thereby facilitating its interaction with the beta and alpha subunits. This Marinomonas sp. (strain MWYL1) protein is DNA-directed RNA polymerase subunit omega.